The sequence spans 411 residues: Dual-specificity RNA methyltransferase RlmN (411 aa).

The active-site Proton acceptor is Glu124. Positions 130–379 (EEGRGTLCIS…IRTPRGRDIL (250 aa)) constitute a Radical SAM core domain. Cysteines 137 and 382 form a disulfide. [4Fe-4S] cluster-binding residues include Cys144, Cys148, and Cys151. S-adenosyl-L-methionine is bound by residues 208–209 (GE), Ser240, 262–264 (SLH), and Asn339. Residue Cys382 is the S-methylcysteine intermediate of the active site.

This sequence belongs to the radical SAM superfamily. RlmN family. [4Fe-4S] cluster serves as cofactor.

Its subcellular location is the cytoplasm. The enzyme catalyses adenosine(2503) in 23S rRNA + 2 reduced [2Fe-2S]-[ferredoxin] + 2 S-adenosyl-L-methionine = 2-methyladenosine(2503) in 23S rRNA + 5'-deoxyadenosine + L-methionine + 2 oxidized [2Fe-2S]-[ferredoxin] + S-adenosyl-L-homocysteine. The catalysed reaction is adenosine(37) in tRNA + 2 reduced [2Fe-2S]-[ferredoxin] + 2 S-adenosyl-L-methionine = 2-methyladenosine(37) in tRNA + 5'-deoxyadenosine + L-methionine + 2 oxidized [2Fe-2S]-[ferredoxin] + S-adenosyl-L-homocysteine. In terms of biological role, specifically methylates position 2 of adenine 2503 in 23S rRNA and position 2 of adenine 37 in tRNAs. m2A2503 modification seems to play a crucial role in the proofreading step occurring at the peptidyl transferase center and thus would serve to optimize ribosomal fidelity. The sequence is that of Dual-specificity RNA methyltransferase RlmN from Sinorhizobium fredii (strain NBRC 101917 / NGR234).